A 34-amino-acid polypeptide reads, in one-letter code: MEVNILALIAVALFISIPTAFLVIIYVKTISENN.

A helical membrane pass occupies residues 5 to 25; it reads ILALIAVALFISIPTAFLVII.

The protein belongs to the PsbM family. PSII is composed of 1 copy each of membrane proteins PsbA, PsbB, PsbC, PsbD, PsbE, PsbF, PsbH, PsbI, PsbJ, PsbK, PsbL, PsbM, PsbT, PsbX, PsbY, PsbZ, Psb30/Ycf12, at least 3 peripheral proteins of the oxygen-evolving complex and a large number of cofactors. It forms dimeric complexes.

The protein resides in the plastid. It is found in the chloroplast thylakoid membrane. In terms of biological role, one of the components of the core complex of photosystem II (PSII). PSII is a light-driven water:plastoquinone oxidoreductase that uses light energy to abstract electrons from H(2)O, generating O(2) and a proton gradient subsequently used for ATP formation. It consists of a core antenna complex that captures photons, and an electron transfer chain that converts photonic excitation into a charge separation. This subunit is found at the monomer-monomer interface. The sequence is that of Photosystem II reaction center protein M from Welwitschia mirabilis (Tree tumbo).